Consider the following 256-residue polypeptide: tRNA (guanine-N(7)-)-methyltransferase (256 aa).

S-adenosyl-L-methionine-binding residues include E85, E110, D137, and D159. Residue D159 is part of the active site. Residues K163 and D195 each contribute to the substrate site.

Belongs to the class I-like SAM-binding methyltransferase superfamily. TrmB family.

It carries out the reaction guanosine(46) in tRNA + S-adenosyl-L-methionine = N(7)-methylguanosine(46) in tRNA + S-adenosyl-L-homocysteine. It participates in tRNA modification; N(7)-methylguanine-tRNA biosynthesis. Catalyzes the formation of N(7)-methylguanine at position 46 (m7G46) in tRNA. The sequence is that of tRNA (guanine-N(7)-)-methyltransferase from Rhodopseudomonas palustris (strain HaA2).